The chain runs to 105 residues: Probable tetrachloroethene reductive dehalogenase membrane anchor protein (105 aa).

A run of 3 helical transmembrane segments spans residues 3–23 (IYDV…QYGI), 35–55 (IPLQ…LAWG), and 66–86 (AIGM…IITY).

The protein belongs to the PceB family.

It localises to the cell membrane. May act as a membrane anchor for the tetrachloroethene reductive dehalogenase PceA. In Desulfitobacterium hafniense (Desulfitobacterium frappieri), this protein is Probable tetrachloroethene reductive dehalogenase membrane anchor protein.